Here is a 142-residue protein sequence, read N- to C-terminus: Putative pre-16S rRNA nuclease (142 aa).

The protein belongs to the YqgF nuclease family.

The protein resides in the cytoplasm. Could be a nuclease involved in processing of the 5'-end of pre-16S rRNA. This is Putative pre-16S rRNA nuclease from Staphylococcus carnosus (strain TM300).